The sequence spans 61 residues: Metallothionein-2 (61 aa).

At methionine 1 the chain carries N-acetylmethionine. The segment at 1–29 (MDPNCSCATDGSCSCSGSCKCKECKCTTC) is beta. The a divalent metal cation site is built by cysteine 5, cysteine 7, cysteine 13, cysteine 15, cysteine 19, cysteine 21, cysteine 24, cysteine 26, cysteine 29, cysteine 33, cysteine 34, cysteine 36, cysteine 37, cysteine 41, cysteine 44, cysteine 48, cysteine 50, and cysteine 57. An alpha region spans residues 30–61 (KKSCCSCCPVGCAKCSQGCVCKEASEKCSCCA). At serine 58 the chain carries Phosphoserine. 2 residues coordinate a divalent metal cation: cysteine 59 and cysteine 60.

Belongs to the metallothionein superfamily. Type 1 family.

Its function is as follows. Metallothioneins have a high content of cysteine residues that bind various heavy metals; these proteins are transcriptionally regulated by both heavy metals and glucocorticoids. The chain is Metallothionein-2 (MT2) from Mesocricetus auratus (Golden hamster).